Reading from the N-terminus, the 350-residue chain is GDSL esterase/lipase At2g04570 (350 aa).

The signal sequence occupies residues Met1–Ala23. Ser35 (nucleophile) is an active-site residue. N-linked (GlcNAc...) asparagine glycosylation is found at Asn98 and Asn117. Active-site residues include Asp325 and His328. The N-linked (GlcNAc...) asparagine glycan is linked to Asn343.

This sequence belongs to the 'GDSL' lipolytic enzyme family.

It localises to the secreted. The protein is GDSL esterase/lipase At2g04570 of Arabidopsis thaliana (Mouse-ear cress).